The chain runs to 289 residues: Protease HtpX homolog (289 aa).

2 helical membrane passes run 11 to 31 (AALF…IAAG) and 34 to 54 (STTP…YGYW). His-138 serves as a coordination point for Zn(2+). Glu-139 is an active-site residue. His-142 provides a ligand contact to Zn(2+). The next 2 helical transmembrane spans lie at 152 to 172 (SVVA…LIFG) and 182 to 202 (LATI…QMAI). Glu-207 contacts Zn(2+).

The protein belongs to the peptidase M48B family. Zn(2+) is required as a cofactor.

Its subcellular location is the cell membrane. The polypeptide is Protease HtpX homolog (Paenarthrobacter aurescens (strain TC1)).